Here is a 278-residue protein sequence, read N- to C-terminus: Probable endonuclease 4 (278 aa).

Positions 67, 107, 141, 173, 176, 210, 223, 225, and 255 each coordinate Zn(2+).

Belongs to the AP endonuclease 2 family. It depends on Zn(2+) as a cofactor.

It catalyses the reaction Endonucleolytic cleavage to 5'-phosphooligonucleotide end-products.. In terms of biological role, endonuclease IV plays a role in DNA repair. It cleaves phosphodiester bonds at apurinic or apyrimidinic (AP) sites, generating a 3'-hydroxyl group and a 5'-terminal sugar phosphate. This is Probable endonuclease 4 from Natronomonas pharaonis (strain ATCC 35678 / DSM 2160 / CIP 103997 / JCM 8858 / NBRC 14720 / NCIMB 2260 / Gabara) (Halobacterium pharaonis).